The following is a 207-amino-acid chain: Large ribosomal subunit protein uL4 (207 aa).

Positions 45–78 are disordered; the sequence is RQGTHAVKNRSAVRGGGRKPWRQKGTGRARQGSI. Positions 60-71 are enriched in basic residues; sequence GGRKPWRQKGTG.

It belongs to the universal ribosomal protein uL4 family. In terms of assembly, part of the 50S ribosomal subunit.

Its function is as follows. One of the primary rRNA binding proteins, this protein initially binds near the 5'-end of the 23S rRNA. It is important during the early stages of 50S assembly. It makes multiple contacts with different domains of the 23S rRNA in the assembled 50S subunit and ribosome. In terms of biological role, forms part of the polypeptide exit tunnel. The sequence is that of Large ribosomal subunit protein uL4 from Pediococcus pentosaceus (strain ATCC 25745 / CCUG 21536 / LMG 10740 / 183-1w).